Reading from the N-terminus, the 92-residue chain is Small ribosomal subunit protein bS20 (92 aa).

A disordered region spans residues 1–25 (MANSAQARKRARQAAKANSHNSALR).

Belongs to the bacterial ribosomal protein bS20 family.

Binds directly to 16S ribosomal RNA. This chain is Small ribosomal subunit protein bS20, found in Burkholderia mallei (strain NCTC 10247).